The following is a 418-amino-acid chain: L-methionine/branched-chain amino acid exporter YjeH (418 aa).

Residues 1 to 15 (MSGLKQELGLAQGIG) lie on the Periplasmic side of the membrane. The helical transmembrane segment at 16–36 (LLSTSLLGTGVFAVPALAALV) threads the bilayer. The Cytoplasmic segment spans residues 37–41 (AGNNS). The chain crosses the membrane as a helical span at residues 42 to 62 (LWAWPVLIILVFPIAIVFAIL). Over 63 to 89 (GRHYPSAGGVAHFVGMAFGSRLERVTG) the chain is Periplasmic. Residues 90-110 (WLFLSVIPVGLPAALQIAAGF) form a helical membrane-spanning segment. Over 111-113 (GQA) the chain is Cytoplasmic. A helical membrane pass occupies residues 114–134 (MFGWHSWQLLLAELGTLALVW). Over 135-147 (YIGTRGASSSANL) the chain is Periplasmic. Residues 148 to 168 (QTVIAGLIVALIVAIWWAGDI) form a helical membrane-spanning segment. Topologically, residues 169-182 (KPANIPFPAPGNIE) are cytoplasmic. Residues 183-203 (LTGLFAALSVMFWCFVGLEAF) traverse the membrane as a helical segment. Residues 204–219 (AHLASEFKNPERDFPR) are Periplasmic-facing. A helical transmembrane segment spans residues 220 to 240 (ALMIGLLLAGLVYWGCTVVVL). Residues 241–257 (HFDAYGEKMAAAASLPK) lie on the Cytoplasmic side of the membrane. Residues 258–278 (IVVQLFGVGALWIACVIGYLA) form a helical membrane-spanning segment. Residues 279 to 317 (CFASLNIYIQSFARLVWSQAQHNPDHYLARLSSRHIPNN) are Periplasmic-facing. The helical transmembrane segment at 318–338 (ALNAVLGCCVVSTLVIHALEI) threads the bilayer. The Cytoplasmic portion of the chain corresponds to 339-341 (NLD). A helical membrane pass occupies residues 342-362 (ALIIYANGIFIMIYLLCMLAG). The Periplasmic segment spans residues 363-378 (CKLLQGRYRLLAVVGG). A helical membrane pass occupies residues 379 to 399 (LLCVLLLAMVGWKSLYALIML). Over 400–418 (AGLWLLLPKRKTPENGITT) the chain is Cytoplasmic.

Belongs to the amino acid-polyamine-organocation (APC) superfamily. Amino acid efflux (AAE) (TC 2.A.3.13) family.

It is found in the cell inner membrane. It catalyses the reaction L-methionine(in) + H(+)(out) = L-methionine(out) + H(+)(in). The enzyme catalyses L-leucine(in) + H(+)(out) = L-leucine(out) + H(+)(in). The catalysed reaction is L-isoleucine(in) + H(+)(out) = L-isoleucine(out) + H(+)(in). It carries out the reaction L-valine(in) + H(+)(out) = L-valine(out) + H(+)(in). Its activity is regulated as follows. Efflux of L-methionine is inhibited by the proton ionophore carbonyl cyanide m-chlorophenylhydrazone (CCCP). Its function is as follows. Catalyzes the efflux of L-methionine, L-leucine, L-isoleucine and L-valine. Activity is dependent on electrochemical potential. This is L-methionine/branched-chain amino acid exporter YjeH (yjeH) from Escherichia coli (strain K12).